The sequence spans 390 residues: MKKRGRKSKKPEEKRAEYDPSSILPLELKIEILMKSPPKSIAKLGFVSNHWSSIIRGQVFTDLYMRRSLAHPRLLFSVYRPNMQMQFFHSCSQEDPSSDHRSVSYTLNSDLRYSFSPPIGGLIFGQNNTKAMIGNPSTGQFVPLPRIKTQRKHIFSIFGYDPVNDLYKVLCMTVRTLRGPHYFRWEDPMWEEPMTEEHQVFTLGPKQKWRMLECKYLHRHHSGSQGICRDGVMYYLASFNDKRSLMSFDLSSEEFNVTKLPEDYILQQFGNMVDHSGKIAIVSQAYSGPMDLWVLEDVSKEEWSKVAAIVPSITDIVGNDQRVIFRGILSTGEIILSLLPTPKPPFFFLCYDPKEKTARKVVIQGIGEDYAAINVFFDHVESHMVLSKLT.

In terms of domain architecture, F-box spans 18-67 (YDPSSILPLELKIEILMKSPPKSIAKLGFVSNHWSSIIRGQVFTDLYMRR). 2 Kelch repeats span residues 115 to 161 (FSPP…FGYD) and 272 to 323 (MVDH…DQRV).

Part of a SCF (ASK-cullin-F-box) protein ligase complex. Interacts with SKP1A/ASK1, SKP1B/ASK2, ASK11 and ASK13.

Its subcellular location is the nucleus. It functions in the pathway protein modification; protein ubiquitination. Component of SCF(ASK-cullin-F-box) E3 ubiquitin ligase complexes, which may mediate the ubiquitination and subsequent proteasomal degradation of target proteins. The chain is F-box/kelch-repeat protein At3g04660 from Arabidopsis thaliana (Mouse-ear cress).